The sequence spans 343 residues: Dihydroorotase (343 aa).

Zn(2+) contacts are provided by H13 and H15. Residues 15 to 17 (HLR) and N41 contribute to the substrate site. Residues K99, H136, and H174 each contribute to the Zn(2+) site. K99 carries the post-translational modification N6-carboxylysine. H136 is a binding site for substrate. L219 is a binding site for substrate. D247 serves as a coordination point for Zn(2+). D247 is a catalytic residue. Positions 251 and 263 each coordinate substrate.

This sequence belongs to the metallo-dependent hydrolases superfamily. DHOase family. Class II DHOase subfamily. Homodimer. It depends on Zn(2+) as a cofactor.

It catalyses the reaction (S)-dihydroorotate + H2O = N-carbamoyl-L-aspartate + H(+). Its pathway is pyrimidine metabolism; UMP biosynthesis via de novo pathway; (S)-dihydroorotate from bicarbonate: step 3/3. Functionally, catalyzes the reversible cyclization of carbamoyl aspartate to dihydroorotate. The polypeptide is Dihydroorotase (Shewanella sp. (strain ANA-3)).